We begin with the raw amino-acid sequence, 749 residues long: MNGAEKSAAGDTYDPSTIPDYDREFIHPDDLRQFELALTDQGASPLVALNDWRPIYQRVRRERGRRKEPRRTKDETREGVLYTVLKWPFLFTVFGWITALAFAYTLTRVYIFLYEQWVTWRGRRQSLRRQLHAQTNYPDWQKAARALDDHLGNQRWKEIDEYAYYDHLTISNLVKQLKKVRREVERERREKRRGSGQSPAAEELCTLLEACVKNNFAGVENPRLYSEAYSGTKNLVQEYIDELHACIQLVADSKGITSEEKLQHFKHLDTNFGRTALCLSGGATFAYYHFGVVRALLDNGVLPEIITGTSGGALVAALVATRTDEELKQLLVPALAHRIRACQESFPTWVWRWWRTGARFDTLDWARQCSWFCRGSTTFREAYERTGRILNVSCVPSDPHSPTILANYLTSPNCVIWSAVLASAAVPGILNPVVLMTKKRDGTLAPYSFGHKWKDGSLRTDIPIKALNLHFNVNFTIVSQVNPHINLFFFSSRGTVGRPVTHRKGRGWRGGFLGSAIEQYIKLDMNKWLRVLRHLELLPRPMGQDWSEIWLQKFSGTVTIWPKTIPSDFYHILSDPNPERLARMLRVGQQSAFPKLQFIKNRLKIEIAVVKSLQKFAHAGGRPISPAPSRWRQNNDPDNHYNPSPRTDPLNERLDHNLPERRGDNVNITFGEGGGREDTHLLDGSLSENSSNESAARPSSSSSSSRLLRVPEHRRGSTGSSIFEEVRRQSAVFFDDVDMYGDDEALRPG.

Residues methionine 1 to tyrosine 21 form a disordered region. The helical transmembrane segment at tryptophan 87–threonine 107 threads the bilayer. One can recognise a PNPLA domain in the interval leucine 277 to asparagine 468. A GXSXG motif is present at residues glycine 308–glycine 312. The Nucleophile role is filled by serine 310. Residue aspartate 455 is the Proton acceptor of the active site. Residues alanine 619 to valine 726 are disordered. The span at proline 649–aspartate 664 shows a compositional bias: basic and acidic residues. Positions serine 685–leucine 707 are enriched in low complexity.

Belongs to the PLPL family.

It localises to the membrane. Functionally, probable lipid hydrolase. The protein is Patatin-like phospholipase domain-containing protein An01g04180 of Aspergillus niger (strain ATCC MYA-4892 / CBS 513.88 / FGSC A1513).